The following is a 197-amino-acid chain: C-type lectin domain family 3 member A (197 aa).

The N-terminal stretch at 1–22 (MAKNGLVICILVITLLLDQTTS) is a signal peptide. Intrachain disulfides connect cysteine 68–cysteine 78, cysteine 95–cysteine 191, and cysteine 167–cysteine 183. Positions 74 to 192 (VHKKCYLASE…CRSSKRYICE (119 aa)) constitute a C-type lectin domain.

In terms of tissue distribution, restricted to cartilage and breast. Also expressed in breast cancers.

The protein localises to the secreted. Functionally, promotes cell adhesion to laminin-332 and fibronectin. The protein is C-type lectin domain family 3 member A (CLEC3A) of Homo sapiens (Human).